We begin with the raw amino-acid sequence, 146 residues long: Antiholin-like protein LrgA (146 aa).

4 helical membrane-spanning segments follow: residues 7 to 29 (YGFLTQAFIFAVIMLVSNMIAAI), 34 to 53 (IPASVVGLVLLFLLLCLKVI), 65 to 87 (LTSLIGFLFVPSGISVMNSLGVM), and 97 to 119 (VILLATIILLGATGLFSQLILSL).

Belongs to the CidA/LrgA family. LrgA subfamily.

It localises to the cell membrane. Its function is as follows. Inhibits the expression or activity of extracellular murein hydrolases by interacting, possibly with LrgB, with the holin-like protein CidA. The LrgAB and CidA proteins may affect the proton motive force of the membrane. May be involved in programmed cell death (PCD), possibly triggering PCD in response to antibiotics and environmental stresses. The sequence is that of Antiholin-like protein LrgA from Bacillus subtilis (strain 168).